The following is a 358-amino-acid chain: Phosphate acyltransferase (358 aa).

This sequence belongs to the PlsX family. Homodimer. Probably interacts with PlsY.

The protein localises to the cytoplasm. It catalyses the reaction a fatty acyl-[ACP] + phosphate = an acyl phosphate + holo-[ACP]. Its pathway is lipid metabolism; phospholipid metabolism. In terms of biological role, catalyzes the reversible formation of acyl-phosphate (acyl-PO(4)) from acyl-[acyl-carrier-protein] (acyl-ACP). This enzyme utilizes acyl-ACP as fatty acyl donor, but not acyl-CoA. This Escherichia fergusonii (strain ATCC 35469 / DSM 13698 / CCUG 18766 / IAM 14443 / JCM 21226 / LMG 7866 / NBRC 102419 / NCTC 12128 / CDC 0568-73) protein is Phosphate acyltransferase.